The sequence spans 428 residues: Large envelope protein (428 aa).

Gly-2 carries the N-myristoyl glycine; by host lipid modification. The tract at residues 2–145 (GNNIKVTFDP…PPLRDTHPHL (144 aa)) is pre-S1. The segment at 2–204 (GNNIKVTFDP…PLTIGDPVLS (203 aa)) is pre-S. Over 2-211 (GNNIKVTFDP…VLSTEMSPSG (210 aa)) the chain is Virion surface; in external conformation. The Intravirion; in internal conformation portion of the chain corresponds to 2-283 (GNNIKVTFDP…NGFRWMYLRR (282 aa)). N-linked (GlcNAc...) asparagine glycosylation occurs at Asn-3. Residues 110–144 (RDIPRGIVPPQTPSNRDQRRKPTPLTPPLRDTHPH) are disordered. Residues 146–204 (TMKNQTGHLQGFAEGLRALTTSDHHNSAYGDPFTTLSPVVPTVSTTLSPPLTIGDPVLS) form a pre-S2 region. The helical transmembrane segment at 212-232 (LLGLLAGLQVVYFLWTKILTI) threads the bilayer. Residues 233–283 (AQSLDWWWTSLSFPGGIPECTGQNLQFQTCKHLPTSCPPTCNGFRWMYLRR) are Intravirion; in external conformation-facing. The chain crosses the membrane as a helical span at residues 284–304 (FIIYLLVLLLFLTFLLVLLDW). Over 305–376 (KGLLPVCPMM…WALARFSWLS (72 aa)) the chain is Virion surface. Residue Asn-348 is glycosylated (N-linked (GlcNAc...) asparagine; by host). The chain crosses the membrane as a helical span at residues 377–397 (LLVPLLQWLGGISLTVWLLLI). Topologically, residues 398–403 (WMIWFW) are intravirion. Residues 404-426 (GPVLMSILPPFIPIFALFFLIWA) form a helical membrane-spanning segment. The Virion surface segment spans residues 427-428 (YI).

It belongs to the orthohepadnavirus major surface antigen family. As to quaternary structure, in its internal form (Li-HBsAg), interacts with the capsid protein and with the isoform S. Interacts with host chaperone CANX. Associates with host chaperone CANX through its pre-S2 N glycan; this association may be essential for isoform M proper secretion. In terms of assembly, interacts with isoform L. Interacts with the antigens of satellite virus HDV (HDVAgs); this interaction is required for encapsidation of HDV genomic RNA. Isoform M is N-terminally acetylated by host at a ratio of 90%, and N-glycosylated by host at the pre-S2 region. Post-translationally, myristoylated.

It localises to the virion membrane. Its function is as follows. The large envelope protein exists in two topological conformations, one which is termed 'external' or Le-HBsAg and the other 'internal' or Li-HBsAg. In its external conformation the protein attaches the virus to cell receptors and thereby initiating infection. This interaction determines the species specificity and liver tropism. This attachment induces virion internalization predominantly through caveolin-mediated endocytosis. The large envelope protein also assures fusion between virion membrane and endosomal membrane. In its internal conformation the protein plays a role in virion morphogenesis and mediates the contact with the nucleocapsid like a matrix protein. The middle envelope protein plays an important role in the budding of the virion. It is involved in the induction of budding in a nucleocapsid independent way. In this process the majority of envelope proteins bud to form subviral lipoprotein particles of 22 nm of diameter that do not contain a nucleocapsid. The sequence is that of Large envelope protein from Ground squirrel hepatitis virus (strain 27) (GSHV).